Consider the following 454-residue polypeptide: Macrophage scavenger receptor types I and II (454 aa).

Positions Met1 to Lys22 are disordered. Residues Met1 to Lys50 lie on the Cytoplasmic side of the membrane. At Ser27 the chain carries Phosphoserine. A helical; Signal-anchor for type II membrane protein transmembrane segment spans residues Ala51–Ala73. A spacer region spans residues Gln74–Arg109. Over Gln74–Leu454 the chain is Extracellular. N-linked (GlcNAc...) asparagine glycosylation is found at Asn82, Asn102, Asn143, Asn184, Asn221, Asn249, and Asn267. Residues Val199–Leu256 are a coiled coil. Residues Asn267–Leu347 form a disordered region. In terms of domain architecture, Collagen-like spans Gly273 to Gly344. The SRCR domain occupies Val353–Thr453. 3 disulfides stabilise this stretch: Cys378–Cys442, Cys391–Cys452, and Cys422–Cys432.

Homotrimer. Interacts with MYO18A.

Its subcellular location is the membrane. Functionally, membrane glycoproteins implicated in the pathologic deposition of cholesterol in arterial walls during atherogenesis. Two types of receptor subunits exist. These receptors mediate the endocytosis of a diverse group of macromolecules, including modified low density lipoproteins (LDL). The sequence is that of Macrophage scavenger receptor types I and II (MSR1) from Oryctolagus cuniculus (Rabbit).